Reading from the N-terminus, the 169-residue chain is Oleosin Cor a 15 (169 aa).

2 consecutive transmembrane segments (helical) span residues 38–58 (IAVV…GLTF) and 70–90 (PLFV…GLAV). A Proline-knot motif is present at residues 70–81 (PLFVLCSPVLVP). 2 stretches are compositionally biased toward basic and acidic residues: residues 122–131 (QMEHAKRRAQ) and 160–169 (EGGRGEEKKT). Residues 122-169 (QMEHAKRRAQDTAGHLGQKARETGQTVTGKGQEAGKTLEGGRGEEKKT) are disordered.

It belongs to the oleosin family. Expressed in seeds (at protein level).

It localises to the lipid droplet. The protein resides in the membrane. Functionally, may have a structural role to stabilize the lipid body during desiccation of the seed by preventing coalescence of the oil. Probably interacts with both lipid and phospholipid moieties of lipid bodies. May also provide recognition signals for specific lipase anchorage in lipolysis during seedling growth. In Corylus avellana (European hazel), this protein is Oleosin Cor a 15.